The primary structure comprises 226 residues: Cytochrome c oxidase subunit 2 (226 aa).

Residues 1-25 lie on the Mitochondrial intermembrane side of the membrane; sequence MNTWLLSLQNSNSPTYDMMIFFHDF. Residues 26 to 47 form a helical membrane-spanning segment; the sequence is TMMILIFITLLILFIMFTMINN. Over 48-61 the chain is Mitochondrial matrix; the sequence is NLINRFLLQGHFIE. Residues 62-81 traverse the membrane as a helical segment; it reads LIWTITPMIILILIAIPSFK. At 82–226 the chain is on the mitochondrial intermembrane side; sequence ILYLTDEMFN…YFKNWLKSFL (145 aa). Cu cation contacts are provided by His160, Cys195, Glu197, Cys199, His203, and Met206. Glu197 contacts Mg(2+).

This sequence belongs to the cytochrome c oxidase subunit 2 family. As to quaternary structure, component of the cytochrome c oxidase (complex IV, CIV), a multisubunit enzyme composed of a catalytic core of 3 subunits and several supernumerary subunits. The complex exists as a monomer or a dimer and forms supercomplexes (SCs) in the inner mitochondrial membrane with ubiquinol-cytochrome c oxidoreductase (cytochrome b-c1 complex, complex III, CIII). The cofactor is Cu cation.

It is found in the mitochondrion inner membrane. It carries out the reaction 4 Fe(II)-[cytochrome c] + O2 + 8 H(+)(in) = 4 Fe(III)-[cytochrome c] + 2 H2O + 4 H(+)(out). Component of the cytochrome c oxidase, the last enzyme in the mitochondrial electron transport chain which drives oxidative phosphorylation. The respiratory chain contains 3 multisubunit complexes succinate dehydrogenase (complex II, CII), ubiquinol-cytochrome c oxidoreductase (cytochrome b-c1 complex, complex III, CIII) and cytochrome c oxidase (complex IV, CIV), that cooperate to transfer electrons derived from NADH and succinate to molecular oxygen, creating an electrochemical gradient over the inner membrane that drives transmembrane transport and the ATP synthase. Cytochrome c oxidase is the component of the respiratory chain that catalyzes the reduction of oxygen to water. Electrons originating from reduced cytochrome c in the intermembrane space (IMS) are transferred via the dinuclear copper A center (CU(A)) of subunit 2 and heme A of subunit 1 to the active site in subunit 1, a binuclear center (BNC) formed by heme A3 and copper B (CU(B)). The BNC reduces molecular oxygen to 2 water molecules using 4 electrons from cytochrome c in the IMS and 4 protons from the mitochondrial matrix. The protein is Cytochrome c oxidase subunit 2 (COII) of Lasius sp.